The sequence spans 445 residues: DNA repair protein RadA (445 aa).

A C4-type zinc finger spans residues 10 to 27 (CSNCANISHKWSGQCFDC). 90 to 97 (GEPGIGKS) serves as a coordination point for ATP. The RadA KNRFG motif signature appears at 249-253 (KNRFG). Positions 348 to 445 (EIYLSIAGGL…HLQDLKEIIK (98 aa)) are lon-protease-like.

The protein belongs to the RecA family. RadA subfamily.

Its function is as follows. DNA-dependent ATPase involved in processing of recombination intermediates, plays a role in repairing DNA breaks. Stimulates the branch migration of RecA-mediated strand transfer reactions, allowing the 3' invading strand to extend heteroduplex DNA faster. Binds ssDNA in the presence of ADP but not other nucleotides, has ATPase activity that is stimulated by ssDNA and various branched DNA structures, but inhibited by SSB. Does not have RecA's homology-searching function. This Rickettsia typhi (strain ATCC VR-144 / Wilmington) protein is DNA repair protein RadA.